We begin with the raw amino-acid sequence, 292 residues long: 33 kDa chaperonin (292 aa).

2 disulfide bridges follow: Cys-230-Cys-232 and Cys-263-Cys-266.

Belongs to the HSP33 family. Under oxidizing conditions two disulfide bonds are formed involving the reactive cysteines. Under reducing conditions zinc is bound to the reactive cysteines and the protein is inactive.

It localises to the cytoplasm. Redox regulated molecular chaperone. Protects both thermally unfolding and oxidatively damaged proteins from irreversible aggregation. Plays an important role in the bacterial defense system toward oxidative stress. The protein is 33 kDa chaperonin of Salmonella paratyphi A (strain ATCC 9150 / SARB42).